A 263-amino-acid chain; its full sequence is Coiled-coil domain-containing protein 172 (263 aa).

A coiled-coil region spans residues 13-191; the sequence is TEHQAEESRR…LKVLKDEETE (179 aa).

Belongs to the CCDC172 family. May interact with TEKT2. As to expression, detected in spermatozoa (at protein level). Predominantly expressed in testis and in spermatozoa from the caput and corpus epididymis.

It localises to the cytoplasm. The protein resides in the cell projection. It is found in the cilium. The sequence is that of Coiled-coil domain-containing protein 172 (Ccdc172) from Rattus norvegicus (Rat).